The sequence spans 171 residues: AN1-type zinc finger protein 2A (171 aa).

2 consecutive AN1-type zinc fingers follow at residues 4–52 (PDLG…KKDV) and 94–142 (KVFT…SSVS). Positions 10, 15, 25, 28, 33, 36, 42, 44, 100, 105, 115, 118, 123, 126, 132, and 134 each coordinate Zn(2+). Residues 135 to 171 (QAGSSSVSRGRSSASRAAEQKPSGVSWLAQRLRRTVK) are disordered. Residues 136-151 (AGSSSVSRGRSSASRA) show a composition bias toward low complexity.

The protein resides in the cytoplasm. It is found in the nucleus. This is AN1-type zinc finger protein 2A (Zfand2a) from Rattus norvegicus (Rat).